A 152-amino-acid polypeptide reads, in one-letter code: Superoxide dismutase [Cu-Zn] 1 (152 aa).

3 residues coordinate Cu cation: H45, H47, and H62. C56 and C145 form a disulfide bridge. The Zn(2+) site is built by H62, H70, H79, and D82. Position 119 (H119) interacts with Cu cation.

Belongs to the Cu-Zn superoxide dismutase family. In terms of assembly, homodimer. Cu cation is required as a cofactor. It depends on Zn(2+) as a cofactor.

The protein resides in the cytoplasm. It carries out the reaction 2 superoxide + 2 H(+) = H2O2 + O2. Functionally, destroys radicals which are normally produced within the cells and which are toxic to biological systems. This chain is Superoxide dismutase [Cu-Zn] 1 (SODCC.1), found in Solanum lycopersicum (Tomato).